The primary structure comprises 577 residues: Arginine--tRNA ligase (577 aa).

The 'HIGH' region motif lies at 122–132; it reads PNVAKEMHVGH.

Belongs to the class-I aminoacyl-tRNA synthetase family. Monomer.

The protein resides in the cytoplasm. It catalyses the reaction tRNA(Arg) + L-arginine + ATP = L-arginyl-tRNA(Arg) + AMP + diphosphate. This Salmonella paratyphi B (strain ATCC BAA-1250 / SPB7) protein is Arginine--tRNA ligase.